Here is a 1574-residue protein sequence, read N- to C-terminus: Synaptojanin-1 (1574 aa).

The 324-residue stretch at 119–442 (VRKVLNSGNF…GDSISKIYAG (324 aa)) folds into the SAC domain. 2 positions are modified to phosphoserine: Ser820 and Ser830. Residues 894–971 (GTVLVSIKSS…RTITITLKSP (78 aa)) enclose the RRM domain. The span at 1029 to 1054 (HLQPSSSSGLGTSPSSSPRTSPCQSP) shows a compositional bias: low complexity. The disordered stretch occupies residues 1029–1327 (HLQPSSSSGL…GVKQEPTLKS (299 aa)). Ser1053 bears the Phosphoserine mark. Residues 1080 to 1100 (SSQGSPVDTQPAAQKDSSQTL) are compositionally biased toward polar residues. Pro residues predominate over residues 1105 to 1127 (PPPPRPVAPPARPAPPQRPPPPS). Ser1147 and Ser1175 each carry phosphoserine. Arg1198 carries the omega-N-methylarginine modification. Thr1217 carries the phosphothreonine modification. Residues 1268–1287 (TMPPSGPQPNLETPPQPPPR) show a composition bias toward pro residues. The span at 1288–1307 (SRSSQSLPSDSSPQLQQEQP) shows a compositional bias: low complexity. Residues Ser1290 and Ser1350 each carry the phosphoserine modification. Thr1354 carries the phosphothreonine modification. Disordered regions lie at residues 1363-1507 (LPSA…SVCP) and 1532-1574 (LPAR…FTER). Composition is skewed to polar residues over residues 1364–1379 (PSAS…SVSC), 1393–1402 (QESMGSSANP), 1424–1436 (RVQS…TSWL), and 1472–1484 (DLQS…TSNP). The segment at 1403–1425 (FPSLPCRNPFTDRTAAPGNPFRV) is 3 X 3 AA repeats of N-P-F. The span at 1535–1548 (RRPPPPPPPVPLLP) shows a compositional bias: pro residues. Over residues 1549 to 1563 (PGTTSSAGPSTTLPS) the composition is skewed to low complexity. Residues 1565-1574 (APSTLDFTER) show a composition bias toward polar residues.

This sequence belongs to the synaptojanin family. It in the central section; belongs to the inositol 1,4,5-trisphosphate 5-phosphatase family. As to quaternary structure, interacts with ASH/GRB2. Interacts with PACSIN1, PACSIN2 and PACSIN3. Interacts with AMPH, SH3GL1, SH3GL2 and SH3GL3. Interacts with MYO1E (via SH3 domain). Interacts with BIN1 and DNM1. Interacts with EPS15.

Its subcellular location is the cytoplasm. The protein localises to the perinuclear region. The enzyme catalyses a 1,2-diacyl-sn-glycero-3-phospho-(1D-myo-inositol-4,5-bisphosphate) + H2O = a 1,2-diacyl-sn-glycero-3-phospho-(1D-myo-inositol 4-phosphate) + phosphate. In terms of biological role, phosphatase that acts on various phosphoinositides, including phosphatidylinositol 4-phosphate, phosphatidylinositol (4,5)-bisphosphate and phosphatidylinositol (3,4,5)-trisphosphate. Has a role in clathrin-mediated endocytosis. Hydrolyzes PIP2 bound to actin regulatory proteins resulting in the rearrangement of actin filaments downstream of tyrosine kinase and ASH/GRB2. This is Synaptojanin-1 (Synj1) from Mus musculus (Mouse).